The sequence spans 486 residues: MMKQPNWLLHRAYVTPERVALIYQDKKWTFRDLADEVNELSNRLAQTSLKKGEAVGLLMNNHPQMVMLVHACFSLGFKIVLLNNKLTKAERRFQLEDVKAAALFTEPVYASDHKGELPVYTMETLPEAGQENVKKIENDFDLNQTATIMYTSGTTGRPKGVEQTFGNHFHSAVSSALNMGLREDDRWLIALPLFHISGLSALFKSVIYGMTVVLHQKFDVDEVIGSIEQHRVTMISVVQTMLSRLLSRLEECPSSLRCLLLGGGPAPLAMLQESKEKGFPVFQSYGMTETCSQIVTLAPEFSVEKLGSAGKPLFGCELKIQDGTRICRPFEHGEIMVKGANVMKGYLYREESTAAAFDQGWLKTGDIGYVDEEGFLFVLDRRSDLIISGGENIYPAEIEAVLLTHSHVKEAGVTGIDDDRWGEVPAAFLVTDHKIPENELYALCESHLAKYKWPASFHFVDELPRNASNKLQRHRLKSKGFLDDSN.

Belongs to the ATP-dependent AMP-binding enzyme family. MenE subfamily.

It carries out the reaction 2-succinylbenzoate + ATP + CoA = 2-succinylbenzoyl-CoA + AMP + diphosphate. The protein operates within quinol/quinone metabolism; 1,4-dihydroxy-2-naphthoate biosynthesis; 1,4-dihydroxy-2-naphthoate from chorismate: step 5/7. It functions in the pathway quinol/quinone metabolism; menaquinone biosynthesis. Converts 2-succinylbenzoate (OSB) to 2-succinylbenzoyl-CoA (OSB-CoA). The polypeptide is 2-succinylbenzoate--CoA ligase (Bacillus pumilus (strain SAFR-032)).